Consider the following 982-residue polypeptide: Hunchback-like protein (982 aa).

A disordered region spans residues 87-194 (QPGEKIHPDG…SNYQVTSEPV (108 aa)). The segment covering 101–110 (PKEDGRKSSE) has biased composition (basic and acidic residues). The segment covering 111–132 (HTNSYDVSASQSPSNDGAQSDS) has biased composition (polar residues). Acidic residues predominate over residues 142 to 152 (CMTETEMDTDE). Residues 153-175 (KDSTIKPEDQATPKLEEGSDSKP) are compositionally biased toward basic and acidic residues. A compositionally biased stretch (polar residues) spans 176 to 193 (ESTSVEGTSSNYQVTSEP). 7 C2H2-type zinc fingers span residues 336-358 (LVCP…MNTH), 361-384 (HQCS…RESH), 538-560 (FKCK…ARTH), 567-589 (LNCQ…YRNH), 595-617 (FQCK…MKSH), 623-647 (FRCM…KYNH), and 734-756 (LKCS…SMSH). Positions 377 to 415 (KKHMRESHTVEEQLRAGFESEPAKESASSPKNLSLSKDG) are disordered. Residues 811 to 896 (EEMDQGSDSA…PPLHSSSIVA (86 aa)) are disordered. 2 stretches are compositionally biased toward polar residues: residues 816-831 (GSDS…QISS) and 843-862 (SLEQ…SNDS). The span at 863 to 875 (AMEKDGESADDAP) shows a compositional bias: basic and acidic residues. C2H2-type zinc fingers lie at residues 929–951 (FYCD…MRFH) and 957–981 (FMCS…QARH).

The protein belongs to the hunchback C2H2-type zinc-finger protein family. In terms of tissue distribution, expressed primarily in ectodermal cells during embryonic and larval development.

It is found in the nucleus. Required for the late stages of development. Plays a role in the developmental timing of postembryonic hypodermal seam cell fusion events and adult alae production. The polypeptide is Hunchback-like protein (Caenorhabditis elegans).